A 190-amino-acid polypeptide reads, in one-letter code: Potassium-transporting ATPase KdpC subunit (190 aa).

Residues 6–26 (PAVFLVLLLTLITGLLYPLLT) form a helical membrane-spanning segment. The tract at residues 67 to 88 (GRPSATSDRPYNPLASSGSNLA) is disordered. The span at 69–88 (PSATSDRPYNPLASSGSNLA) shows a compositional bias: polar residues.

This sequence belongs to the KdpC family. The system is composed of three essential subunits: KdpA, KdpB and KdpC.

It is found in the cell inner membrane. Its function is as follows. Part of the high-affinity ATP-driven potassium transport (or Kdp) system, which catalyzes the hydrolysis of ATP coupled with the electrogenic transport of potassium into the cytoplasm. This subunit acts as a catalytic chaperone that increases the ATP-binding affinity of the ATP-hydrolyzing subunit KdpB by the formation of a transient KdpB/KdpC/ATP ternary complex. This is Potassium-transporting ATPase KdpC subunit from Erwinia tasmaniensis (strain DSM 17950 / CFBP 7177 / CIP 109463 / NCPPB 4357 / Et1/99).